Reading from the N-terminus, the 269-residue chain is Tryptophan synthase alpha chain (269 aa).

Catalysis depends on proton acceptor residues Glu-49 and Asp-60.

This sequence belongs to the TrpA family. As to quaternary structure, tetramer of two alpha and two beta chains.

It carries out the reaction (1S,2R)-1-C-(indol-3-yl)glycerol 3-phosphate + L-serine = D-glyceraldehyde 3-phosphate + L-tryptophan + H2O. The protein operates within amino-acid biosynthesis; L-tryptophan biosynthesis; L-tryptophan from chorismate: step 5/5. Its function is as follows. The alpha subunit is responsible for the aldol cleavage of indoleglycerol phosphate to indole and glyceraldehyde 3-phosphate. The chain is Tryptophan synthase alpha chain from Photobacterium profundum (strain SS9).